We begin with the raw amino-acid sequence, 652 residues long: Complement component C1q receptor (652 aa).

An N-terminal signal peptide occupies residues 1–21 (MATSMGLLLLLLLLLTQPGAG). The Extracellular segment spans residues 24–580 (ADTEAVVCVG…QNNDGTDGQK (557 aa)). The 143-residue stretch at 32-174 (VGTACYTAHS…CGSPGSPGSN (143 aa)) folds into the C-type lectin domain. Intrachain disulfides connect Cys-141–Cys-165, Cys-264–Cys-275, Cys-271–Cys-285, Cys-287–Cys-300, Cys-306–Cys-317, Cys-311–Cys-328, Cys-330–Cys-343, Cys-349–Cys-358, Cys-354–Cys-367, Cys-369–Cys-383, Cys-389–Cys-400, Cys-396–Cys-409, Cys-411–Cys-425, Cys-431–Cys-443, Cys-439–Cys-452, and Cys-454–Cys-467. EGF-like domains follow at residues 260 to 301 (PKYG…VTCA) and 302 to 344 (SRNP…LDCV). N-linked (GlcNAc...) asparagine glycosylation is present at Asn-325. The 40-residue stretch at 345–384 (DVDECQDSPCAQECVNTPGGFRCECWVGYEPGGPGEGACQ) folds into the EGF-like 3; calcium-binding domain. An EGF-like 4; calcium-binding domain is found at 385–426 (DVDECALGRSPCAQGCTNTDGSFHCSCEEGYVLAGEDGTQCQ). The 42-residue stretch at 427–468 (DVDECVGPGGPLCDSLCFNTQGSFHCGCLPGWVLAPNGVSCT) folds into the EGF-like 5; calcium-binding domain. 2 disordered regions span residues 472–546 (VSLG…VWRE) and 553–572 (TAAS…ATQN). Positions 512–526 (ATPTTSRPSLSSDAP) are enriched in polar residues. Residues 581–601 (LLLFYILGTVVAILLLLALAL) form a helical membrane-spanning segment. Topologically, residues 602–652 (GLLVYRKRRAKREEKKEKKPQNAADSYSWVPERAESRAMENQYSPTPGTDC) are cytoplasmic. The interval 611–652 (AKREEKKEKKPQNAADSYSWVPERAESRAMENQYSPTPGTDC) is disordered. Positions 612–621 (KREEKKEKKP) are enriched in basic and acidic residues. The residue at position 627 (Ser-627) is a Phosphoserine. Phosphotyrosine is present on residues Tyr-628 and Tyr-644. The segment covering 640-652 (MENQYSPTPGTDC) has biased composition (polar residues).

As to quaternary structure, homodimer. Interacts with C1QBP; the association may represent a cell surface C1q receptor. Interacts with surfactant protein A/SFTPA1. Interacts with multimerin-2/MMRN2. Interacts with DAG1; this interaction plays an important role in endothelial cell migration. Interacts with CBL. Interacts with IGFBP7. Interacts with VEGFR2. (Microbial infection) Interacts with hepatitis virus C/HCV core protein. Post-translationally, N- and O-glycosylated. Phosphorylated on Tyr-628 and Tyr-644 by SRC; these phosphorylations promote endothelial cell adhesion and migration. In terms of tissue distribution, highly expressed in endothelial cells, platelets, cells of myeloid origin, such as monocytes and neutrophils. Not expressed in cells of lymphoid origin.

It localises to the cell membrane. In terms of biological role, cell surface receptor that plays a role in various physiological processes including inflammation, phagocytosis, and cell adhesion. Plays a role in phagocytosis and enhances the uptake of apoptotic cells and immune complexes by acting as a receptor for defense collagens including surfactant protein A/SFTPA1, C1q, and mannose-binding lectin (MBL2). Plays a role in the regulation of endothelial cell function and adhesion by activating angiogenesis. Mechanistically, exerts its angiogenic function by associating with beta-dystroglycan, leading to SRC-dependent phosphorylation and subsequent recruitment of CBL. In turn, CBL provides a docking site for downstream signaling components, such as CRKL to enhance cell migration. Participates in angiogenesis also by acting as a receptor for the ECM pan-endothelial glycoprotein multimerin-2/MMRN2 and IGFBP7 ligands. Both ligands play a non-redundant role in CD93-mediated endothelial cell function. Acts as a key regulator of endothelial barrier function through modulating VEGFR2 function. This chain is Complement component C1q receptor (CD93), found in Homo sapiens (Human).